The primary structure comprises 708 residues: MSTADALDDENTFKILVATDIHLGFMEKDAVRGNDTFVTLDEILRLAQENEVDFILLGGDLFHENKPSRKTLHTCLELLRKYCMGDRPVQFEILSDQSVNFGFSKFPWVNYQDGNLNISIPVFSIHGNHDDPTGADALCALDILSCAGFVNHFGRSMSVEKIDISPVLLQKGSTKIALYGLGSIPDERLYRMFVNKKVTMLRPKEDENSWFNLFVIHQNRSKHGSTNFIPEQFLDDFIDLVIWGHEHECKIAPTKNEQQLFYISQPGSSVVTSLSPGEAVKKHVGLLRIKGRKMNMHKIPLHTVRQFFMEDIVLANHPDIFNPDNPKVTQAIQSFCLEKIEEMLENAERERLGNSHQPEKPLVRLRVDYSGGFEPFSVLRFSQKFVDRVANPKDIIHFFRHREQKEKTGEEINFGKLITKPSEGTTLRVEDLVKQYFQTAEKNVQLSLLTERGMGEAVQEFVDKEEKDAIEELVKYQLEKTQRFLKERHIDALEDKIDEEVRRFRETRQKNTNEEDDEVREAMTRARALRSQSEESASAFSADDLMSIDLAEQMANDSDDSISAATNKGRGRGRGRRGGRGQNSASRGGSQRGRADTGLETSTRSRNSKTAVSASRNMSIIDAFKSTRQQPSRNVTTKNYSEVIEVDESDVEEDIFPTTSKTDQRWSSTSSSKIMSQSQVSKGVDFESSEDDDDDPFMNTSSLRRNRR.

The residue at position 2 (Ser-2) is an N-acetylserine. Ser-2 is subject to Phosphoserine. Asp-20, His-22, and Asp-60 together coordinate Mn(2+). Positions 87-117 (RPVQFEILSDQSVNFGFSKFPWVNYQDGNLN) are interaction with NBN. Mn(2+) is bound at residue Asn-128. The Proton donor role is filled by His-129. Positions 217, 245, and 247 each coordinate Mn(2+). Lys-255 is covalently cross-linked (Glycyl lysine isopeptide (Lys-Gly) (interchain with G-Cter in SUMO2)). Position 275 is a phosphoserine (Ser-275). Residue Lys-282 forms a Glycyl lysine isopeptide (Lys-Gly) (interchain with G-Cter in UFM1) linkage. Residue Lys-339 forms a Glycyl lysine isopeptide (Lys-Gly) (interchain with G-Cter in ubiquitin) linkage. Residue Lys-384 forms a Glycyl lysine isopeptide (Lys-Gly) (interchain with G-Cter in SUMO) linkage. Lys-416 is covalently cross-linked (Glycyl lysine isopeptide (Lys-Gly) (interchain with G-Cter in SUMO2)). Lys-467 participates in a covalent cross-link: Glycyl lysine isopeptide (Lys-Gly) (interchain with G-Cter in SUMO). A Glycyl lysine isopeptide (Lys-Gly) (interchain with G-Cter in ubiquitin) cross-link involves residue Lys-480. Disordered regions lie at residues 507-540 (TRQKNTNEEDDEVREAMTRARALRSQSEESASAF) and 556-614 (NDSD…AVSA). Positions 569-579 (GRGRGRGRRGG) are enriched in basic residues. 9 positions are modified to asymmetric dimethylarginine: Arg-570, Arg-572, Arg-574, Arg-576, Arg-577, Arg-580, Arg-587, Arg-592, and Arg-594. Positions 570-594 (RGRGRGRRGGRGQNSASRGGSQRGR) match the GAR motif. Residues 599 to 614 (LETSTRSRNSKTAVSA) show a composition bias toward polar residues. Residue Ser-619 is modified to Phosphoserine. A Glycyl lysine isopeptide (Lys-Gly) (interchain with G-Cter in SUMO2) cross-link involves residue Lys-625. Ser-641 is subject to Phosphoserine. Phosphoserine; by PLK1 is present on Ser-649. Residues 651–708 (VEEDIFPTTSKTDQRWSSTSSSKIMSQSQVSKGVDFESSEDDDDDPFMNTSSLRRNRR) form a disordered region. Residues 667-681 (SSTSSSKIMSQSQVS) are compositionally biased toward low complexity. Position 673 is an N6-lactoyllysine (Lys-673). Phosphoserine; by ATM is present on residues Ser-676 and Ser-678. A compositionally biased stretch (acidic residues) spans 687 to 696 (ESSEDDDDDP). The residue at position 688 (Ser-688) is a Phosphoserine; by CDK2. Phosphoserine occurs at positions 689 and 701. The span at 698-708 (MNTSSLRRNRR) shows a compositional bias: polar residues.

This sequence belongs to the MRE11/RAD32 family. In terms of assembly, component of the MRN complex composed of two heterodimers RAD50 and MRE11 associated with a single NBN. The MRN complexes dimerize on DNA to form joined MRN-MRN oligomers required for DNA double-strand break repair. As part of the MRN complex, interacts with MCM9; the interaction recruits the complex to DNA repair sites. Component of the BASC complex, at least composed of BRCA1, MSH2, MSH6, MLH1, ATM, BLM, RAD50, MRE11 and NBN. Found in a complex with TERF2. Interacts with DCLRE1C/Artemis and DCLRE1B/Apollo. Interacts with ATF2. Interacts with EXD2. Interacts with MRNIP. Interacts with SAMHD1; leading to stimulate 3'-5' exonuclease activity. Interacts (when ubiquitinated) with UBQLN4 (via its UBA domain). Interacts with CYREN (via XLF motif). Interacts with GFI1; promoting methylation by PRMT1. Interacts with DYNLL1; inhibiting the activity of MRE11. Interacts with C1QBP and RAD50; interaction takes place in absence of DNA damage to form the MRC (MRE11-RAD50-C1QBP) complex that inhibits the activity of MRE11. Interacts with AGER/RAGE. AGER is recruited to DNA double-strand break sites where it enhances MRE11 endonuclease activity to promote DNA repair. (Microbial infection) Interacts with herpes simplex virus 1 protein UL12. Requires Mn(2+) as cofactor. Post-translationally, phosphorylated by ATM at Ser-676 and Ser-678 in response to DNA damage, promoting MRE11 activity: phosphorylation activates MRE11 by preventing the interaction between MRE11 and the C1QBP inhibitor. Phosphorylation at Ser-649 by PLK1 primes for phosphorylation at Ser-688 by CK2, inhibiting recruitment of the MRN complex to DNA damage sites. In terms of processing, asymmetric dimethylation by PRMT1 promotes MRE11 exonuclease activity. Lactylation at Lys-673 by CREBBP/CBP in response to DNA damage promotes DNA binding and MRE11 activity. Post-translationally, acetylated on lysine residues by KAT2A /GCN5. In terms of processing, ubiquitinated following DNA damage. Ubiquitination triggers interaction with UBQLN4, leading to MRE11 removal from chromatin and degradation by the proteasome. Ubiquitinated at Lys-339 and Lys-480 by RNF126 via 'Lys-27'- and 'Lys-29'-linked polyubiquitin chains, promoting the exonuclease activity of MRE11. SUMOylated by PIAS1, stabilizing MRE11 on chromatin during end resection. DeSUMOylated by SENP3 following removal from DNA double-strand breaks (DSBs). Post-translationally, ufmylation at Lys-282 promotes MRE11 activity and is required for activation of the ATM and ATR kinases by the MRN complex. In terms of processing, (Microbial infection) Following infection by adenovirus E4, ubiquitinated and degraded by a SCF-like E3 ubiquitin ligase complex containing viral proteins E1B-55K and E4-ORF6.

The protein localises to the nucleus. It is found in the chromosome. Its subcellular location is the telomere. With respect to regulation, interaction with SAMHD1 stimulates the double-strand-specific 3'-5' exonuclease activity. RBBP8/CtIP specifically promotes the endonuclease activity to clear protein-DNA adducts and generate clean double-strand break ends. DYNLL1-binding inhibits the activity of MRE11. MRE11 activity is inhibited by C1QBP: in absence of DNA damage, C1QBP interacts with unphosphorylated MRE11, preventing formation and activity of the MRN complex. The mirin-derivative PFM39, specifically inhibits the 3'-5' exonuclease activity. The N-alkylated mirin-derivatives PFM03 and PFM01 specifically inhibit the endonuclease activity. Functionally, core component of the MRN complex, which plays a central role in double-strand break (DSB) repair, DNA recombination, maintenance of telomere integrity and meiosis. The MRN complex is involved in the repair of DNA double-strand breaks (DSBs) via homologous recombination (HR), an error-free mechanism which primarily occurs during S and G2 phases. The complex (1) mediates the end resection of damaged DNA, which generates proper single-stranded DNA, a key initial steps in HR, and is (2) required for the recruitment of other repair factors and efficient activation of ATM and ATR upon DNA damage. Within the MRN complex, MRE11 possesses both single-strand endonuclease activity and double-strand-specific 3'-5' exonuclease activity. After DSBs, MRE11 is loaded onto DSBs sites and cleaves DNA by cooperating with RBBP8/CtIP to initiate end resection. MRE11 first endonucleolytically cleaves the 5' strand at DNA DSB ends to prevent non-homologous end joining (NHEJ) and licence HR. It then generates a single-stranded DNA gap via 3' to 5' exonucleolytic degradation to create entry sites for EXO1- and DNA2-mediated 5' to 3' long-range resection, which is required for single-strand invasion and recombination. RBBP8/CtIP specifically promotes the endonuclease activity of MRE11 to clear protein-DNA adducts and generate clean double-strand break ends. MRE11 endonuclease activity is also enhanced by AGER/RAGE. The MRN complex is also required for DNA damage signaling via activation of the ATM and ATR kinases: the nuclease activity of MRE11 is not required to activate ATM and ATR. The MRN complex is also required for the processing of R-loops. The MRN complex is involved in the activation of the cGAS-STING pathway induced by DNA damage during tumorigenesis: the MRN complex acts by displacing CGAS from nucleosome sequestration, thereby activating it. In telomeres the MRN complex may modulate t-loop formation. MRE11 contains two DNA-binding domains (DBDs), enabling it to bind both single-stranded DNA (ssDNA) and double-stranded DNA (dsDNA). The sequence is that of Double-strand break repair protein MRE11 from Homo sapiens (Human).